Here is a 144-residue protein sequence, read N- to C-terminus: 3-dehydroquinate dehydratase (144 aa).

Catalysis depends on tyrosine 22, which acts as the Proton acceptor. Positions 71, 77, and 84 each coordinate substrate. Histidine 97 (proton donor) is an active-site residue. Substrate-binding positions include 98–99 (IS) and arginine 108.

Belongs to the type-II 3-dehydroquinase family. As to quaternary structure, homododecamer.

It carries out the reaction 3-dehydroquinate = 3-dehydroshikimate + H2O. It participates in metabolic intermediate biosynthesis; chorismate biosynthesis; chorismate from D-erythrose 4-phosphate and phosphoenolpyruvate: step 3/7. In terms of biological role, catalyzes a trans-dehydration via an enolate intermediate. The protein is 3-dehydroquinate dehydratase of Thermotoga petrophila (strain ATCC BAA-488 / DSM 13995 / JCM 10881 / RKU-1).